Consider the following 184-residue polypeptide: ATP-dependent protease subunit HslV (184 aa).

The active site involves Thr8. 3 residues coordinate Na(+): Gly165, Asp168, and Thr171.

This sequence belongs to the peptidase T1B family. HslV subfamily. As to quaternary structure, a double ring-shaped homohexamer of HslV is capped on each side by a ring-shaped HslU homohexamer. The assembly of the HslU/HslV complex is dependent on binding of ATP.

The protein localises to the cytoplasm. The enzyme catalyses ATP-dependent cleavage of peptide bonds with broad specificity.. With respect to regulation, allosterically activated by HslU binding. In terms of biological role, protease subunit of a proteasome-like degradation complex believed to be a general protein degrading machinery. This Pediococcus pentosaceus (strain ATCC 25745 / CCUG 21536 / LMG 10740 / 183-1w) protein is ATP-dependent protease subunit HslV.